A 1028-amino-acid chain; its full sequence is Contactin-6 (1028 aa).

The first 19 residues, 1 to 19 (MRLLWKLVILLPLINSSAG), serve as a signal peptide directing secretion. Ig-like C2-type domains are found at residues 26 to 117 (PIFT…AKLQ), 122 to 208 (EDFE…RSVQ), 227 to 308 (PKIE…RNLA), 318 to 402 (PEWE…AELR), 408 to 495 (PDFS…GSLI), and 499 to 587 (RTVI…ESLS). 6 disulfide bridges follow: C50–C100, C144–C196, C249–C297, C339–C386, C431–C479, and C521–C577. Residues N65 and N193 are each glycosylated (N-linked (GlcNAc...) asparagine). N368, N377, and N468 each carry an N-linked (GlcNAc...) asparagine glycan. Fibronectin type-III domains lie at 600 to 698 (PPED…TKAS), 703 to 800 (APVN…SGED), 805 to 901 (APRG…TKKS), and 902 to 996 (PPSQ…KMSS). N-linked (GlcNAc...) asparagine glycans are attached at residues N659, N765, N860, and N865. Y882 is subject to Phosphotyrosine. A compositionally biased stretch (polar residues) spans 887–902 (TGPSSPPVNVTTKKSP). A disordered region spans residues 887–908 (TGPSSPPVNVTTKKSPPSQPPA). 4 N-linked (GlcNAc...) asparagine glycosylation sites follow: N895, N931, N956, and N957. S999 carries GPI-anchor amidated serine lipidation. A propeptide spans 1000–1028 (RGIQFLEPSTHFLSIVIVIFHCFAIQPLI) (removed in mature form).

It belongs to the immunoglobulin superfamily. Contactin family. In terms of assembly, interacts with PTPRG. Expressed in nervous system. Highly expressed in cerebellum. Expressed at intermediate level in thalamus, subthalamic nucleus. Weakly expressed in corpus callosum, caudate nucleus and spinal cord.

The protein localises to the cell membrane. In terms of biological role, contactins mediate cell surface interactions during nervous system development. Participates in oligodendrocytes generation by acting as a ligand of NOTCH1. Its association with NOTCH1 promotes NOTCH1 activation through the released notch intracellular domain (NICD) and subsequent translocation to the nucleus. Involved in motor coordination. The chain is Contactin-6 (CNTN6) from Homo sapiens (Human).